Here is an 862-residue protein sequence, read N- to C-terminus: MASNGHFSSVGDVDGGNYQHGVQVVDGDKEFNPNLSKYLAHENVTPAGFNYHLISVFGSQSTGKSTLLNTLFKTDFSVMSETERRQTTKGIWLSKNKRTASNEKEKMADNVLVMDVEGTDGRERGEDQDFERKSALFALATSEVLIVNIWEHQVGLYQGANMGLLKTVFEVNLQLFLKDTKSTPRSLLFFVIRDFVGTTPLENLRNTLMQDLQRIWMSLSKPEGTENSTIEDYFDFEFAGLPHKSFQPEKFASEVDKLSTRFRDGHRDPSSTSAKGTAVEGGVFLPEYHRRIPADGFAVYAEGIWDQIVNNKDLDLPTQQELLAQFRCDEIAREVLILFDETIGPFEVQQAEGVRSGIPLILGSLGVAMRAARGKTMTSFETEASRYHKRVFMTKKSELEEKIDTRLKALFSGQLSAAHKSGVTQFSEAVSAAVKAGQKKGASYDFAEIVTRERKLAIEKFENEASTTMVEGAPWSDYKQELSLFQKDLEKISSQLRKDEMRRLATRVERWVRSRLGDSIDLEFNALGSGRGGSRAPENGDKPSEKTIWDRIWSLFVNTVLDAERRFTERARSFDASLEEVDVGLWRLRRKSWGVLRSKIEEEMMEGNILHKLRENFEDKFRYDDVGVPRIWRPTDDIEGIYTTARESTLSLIPLLARFRLNETSAPPPLDKWVGHMPSSASAADEEDLAPIGGVDEDDGKSLEEEMTMLSEAKRQDLTVRFKKAADGVYVEAKRSAIGGITQVPLYFYGLLLALGWNEIIAVLRNPIYFIFLLLIGVGAYVTFRLNLWGPMINMAEAASRQAVEEGKRRLREFLESSDSGRQAMAMSGRNARGTEEYEMSSNLKSKGRRTDTSDDDNDDDL.

Over 1 to 743 the chain is Cytoplasmic; it reads MASNGHFSSV…KRSAIGGITQ (743 aa). Residues 48-301 enclose the GB1/RHD3-type G domain; the sequence is GFNYHLISVF…IPADGFAVYA (254 aa). Residue 58 to 65 participates in GTP binding; sequence GSQSTGKS. Positions 476–500 form a coiled coil; sequence SDYKQELSLFQKDLEKISSQLRKDE. Residues 744–764 form a helical membrane-spanning segment; sequence VPLYFYGLLLALGWNEIIAVL. Residues 765–767 are Lumenal-facing; the sequence is RNP. Residues 768–788 traverse the membrane as a helical segment; the sequence is IYFIFLLLIGVGAYVTFRLNL. At 789–862 the chain is on the cytoplasmic side; the sequence is WGPMINMAEA…TSDDDNDDDL (74 aa). Positions 818–862 are disordered; sequence SDSGRQAMAMSGRNARGTEEYEMSSNLKSKGRRTDTSDDDNDDDL.

This sequence belongs to the TRAFAC class dynamin-like GTPase superfamily. GB1/RHD3 GTPase family. RHD3 subfamily.

The protein resides in the endoplasmic reticulum membrane. In terms of biological role, cooperates with the reticulon proteins and tubule-shaping DP1 family proteins to generate and maintain the structure of the tubular endoplasmic reticulum network. Has GTPase activity, which is required for its function in ER organization. This chain is Protein SEY1, found in Arthroderma otae (strain ATCC MYA-4605 / CBS 113480) (Microsporum canis).